Reading from the N-terminus, the 274-residue chain is NH(3)-dependent NAD(+) synthetase (274 aa).

46 to 53 (GISGGQDS) is a binding site for ATP. Residue D52 participates in Mg(2+) binding. Deamido-NAD(+) is bound at residue R140. T160 lines the ATP pocket. E165 contributes to the Mg(2+) binding site. Deamido-NAD(+) contacts are provided by K173 and D180. The ATP site is built by K189 and T211. A deamido-NAD(+)-binding site is contributed by 260-261 (HK).

The protein belongs to the NAD synthetase family. In terms of assembly, homodimer.

The catalysed reaction is deamido-NAD(+) + NH4(+) + ATP = AMP + diphosphate + NAD(+) + H(+). Its pathway is cofactor biosynthesis; NAD(+) biosynthesis; NAD(+) from deamido-NAD(+) (ammonia route): step 1/1. Its function is as follows. Catalyzes the ATP-dependent amidation of deamido-NAD to form NAD. Uses ammonia as a nitrogen source. The sequence is that of NH(3)-dependent NAD(+) synthetase from Listeria monocytogenes serovar 1/2a (strain ATCC BAA-679 / EGD-e).